The primary structure comprises 264 residues: MRQYLDLLAHVLENGIDREDRTGTGTRGVFGYQMRFDLSDGFPVLTTKKLHLRSIIYELLWFLKGDTNIRYLQENGVTIWDEWADENGDLGPVYGAQWRSWPAPDGRHIDQIANLLNGLRENPYSRRHIVTAWNPAEIDGMALPPCHCLFQFHVAEGRLSCQLYQRSADIFLGVPFNIASYALLTMMIAQVTGLKPGDFVHTLGDAHLYKNHFDQAREQLTRTPKPLPTMWINPEVDDLFAFGYEDFRLEGYVADPTIRAPIAV.

R21 provides a ligand contact to dUMP. H51 contributes to the (6R)-5,10-methylene-5,6,7,8-tetrahydrofolate binding site. 126–127 (RR) contributes to the dUMP binding site. Residue C146 is the Nucleophile of the active site. Residues 166–169 (RSAD), N177, and 207–209 (HLY) contribute to the dUMP site. D169 contributes to the (6R)-5,10-methylene-5,6,7,8-tetrahydrofolate binding site. A263 serves as a coordination point for (6R)-5,10-methylene-5,6,7,8-tetrahydrofolate.

Belongs to the thymidylate synthase family. Bacterial-type ThyA subfamily. In terms of assembly, homodimer.

The protein localises to the cytoplasm. The enzyme catalyses dUMP + (6R)-5,10-methylene-5,6,7,8-tetrahydrofolate = 7,8-dihydrofolate + dTMP. It participates in pyrimidine metabolism; dTTP biosynthesis. In terms of biological role, catalyzes the reductive methylation of 2'-deoxyuridine-5'-monophosphate (dUMP) to 2'-deoxythymidine-5'-monophosphate (dTMP) while utilizing 5,10-methylenetetrahydrofolate (mTHF) as the methyl donor and reductant in the reaction, yielding dihydrofolate (DHF) as a by-product. This enzymatic reaction provides an intracellular de novo source of dTMP, an essential precursor for DNA biosynthesis. The protein is Thymidylate synthase of Chelativorans sp. (strain BNC1).